The chain runs to 484 residues: Glucan endo-1,3-beta-glucosidase 5 (484 aa).

The first 26 residues, 1–26 (MLFKGVFAVFFVITLLYASLLIEVEG), serve as a signal peptide directing secretion. N-linked (GlcNAc...) asparagine glycosylation is present at N102. The active-site Proton donor is E122. N-linked (GlcNAc...) asparagine glycosylation is found at N129 and N260. E267 serves as the catalytic Nucleophile. C366 and C428 are joined by a disulfide. An N-linked (GlcNAc...) asparagine glycan is attached at N409. A460 carries the GPI-anchor amidated alanine lipid modification. A propeptide spans 461–484 (SAMMPITRSTAVLLLLSICLYIVL) (removed in mature form).

Belongs to the glycosyl hydrolase 17 family. Contains two additional disulfide bonds.

It is found in the cell membrane. The catalysed reaction is Hydrolysis of (1-&gt;3)-beta-D-glucosidic linkages in (1-&gt;3)-beta-D-glucans.. This Arabidopsis thaliana (Mouse-ear cress) protein is Glucan endo-1,3-beta-glucosidase 5.